A 175-amino-acid chain; its full sequence is Cell number regulator 9 (175 aa).

A run of 2 helical transmembrane segments spans residues 53 to 73 (GLCCLTCWCPCITFGRIAEIV) and 80 to 100 (CGVAGTIYTLLACFTGCHWIY).

It belongs to the cornifelin family. In terms of tissue distribution, expressed in roots, coleoptiles, leaves and stalks.

It localises to the membrane. The chain is Cell number regulator 9 (CNR9) from Zea mays (Maize).